A 328-amino-acid chain; its full sequence is DNA-directed RNA polymerase subunit alpha (328 aa).

The interval 1 to 234 (MQNSPTEYLK…GQLSVFADLE (234 aa)) is alpha N-terminal domain (alpha-NTD). The alpha C-terminal domain (alpha-CTD) stretch occupies residues 248–328 (VDPILLRPVD…NWPPAGLEKV (81 aa)).

Belongs to the RNA polymerase alpha chain family. In terms of assembly, homodimer. The RNAP catalytic core consists of 2 alpha, 1 beta, 1 beta' and 1 omega subunit. When a sigma factor is associated with the core the holoenzyme is formed, which can initiate transcription.

The enzyme catalyses RNA(n) + a ribonucleoside 5'-triphosphate = RNA(n+1) + diphosphate. DNA-dependent RNA polymerase catalyzes the transcription of DNA into RNA using the four ribonucleoside triphosphates as substrates. The polypeptide is DNA-directed RNA polymerase subunit alpha (Methylobacillus flagellatus (strain ATCC 51484 / DSM 6875 / VKM B-1610 / KT)).